A 367-amino-acid chain; its full sequence is N-acetylmuramoyl-L-alanine amidase BlyA (367 aa).

The 135-residue stretch at 24-158 folds into the N-acetylmuramoyl-L-alanine amidase domain; the sequence is VKKCVLHYTA…DITHKNCPAP (135 aa). Positions 178 to 204 are disordered; sequence SGKSVSKASPTKPTTSSPSSSSAVSGS. Residues 180-204 are compositionally biased toward low complexity; that stretch reads KSVSKASPTKPTTSSPSSSSAVSGS. 2 consecutive SH3b domains span residues 202–271 and 298–367; these read SGSL…YVDV and GKIK…GSTI.

The protein belongs to the N-acetylmuramoyl-L-alanine amidase 2 family.

It localises to the secreted. It catalyses the reaction Hydrolyzes the link between N-acetylmuramoyl residues and L-amino acid residues in certain cell-wall glycopeptides.. Functionally, autolysins are involved in some important biological processes such as cell separation, cell-wall turnover, competence for genetic transformation, formation of the flagella and sporulation. Involved in prophage SP-beta-mediated cell lysis. The sequence is that of N-acetylmuramoyl-L-alanine amidase BlyA (blyA) from Bacillus subtilis (strain 168).